The primary structure comprises 328 residues: DNA-directed RNA polymerase subunit alpha (328 aa).

Residues 1 to 244 (MEKFLKYEIK…EHLNPIVSVN (244 aa)) are alpha N-terminal domain (alpha-NTD). An alpha C-terminal domain (alpha-CTD) region spans residues 261 to 328 (KVKSFAKQIE…VQELGLKFRS (68 aa)).

Belongs to the RNA polymerase alpha chain family. As to quaternary structure, homodimer. The RNAP catalytic core consists of 2 alpha, 1 beta, 1 beta' and 1 omega subunit. When a sigma factor is associated with the core the holoenzyme is formed, which can initiate transcription.

It carries out the reaction RNA(n) + a ribonucleoside 5'-triphosphate = RNA(n+1) + diphosphate. Its function is as follows. DNA-dependent RNA polymerase catalyzes the transcription of DNA into RNA using the four ribonucleoside triphosphates as substrates. The chain is DNA-directed RNA polymerase subunit alpha from Mycoplasma genitalium (strain ATCC 33530 / DSM 19775 / NCTC 10195 / G37) (Mycoplasmoides genitalium).